The following is a 79-amino-acid chain: Acyl carrier protein (79 aa).

The region spanning 2–77 (SDIEQRVKKI…QAIDYAKAHV (76 aa)) is the Carrier domain. Ser37 is subject to O-(pantetheine 4'-phosphoryl)serine.

The protein belongs to the acyl carrier protein (ACP) family. 4'-phosphopantetheine is transferred from CoA to a specific serine of apo-ACP by AcpS. This modification is essential for activity because fatty acids are bound in thioester linkage to the sulfhydryl of the prosthetic group.

The protein resides in the cytoplasm. The protein operates within lipid metabolism; fatty acid biosynthesis. Carrier of the growing fatty acid chain in fatty acid biosynthesis. The polypeptide is Acyl carrier protein (Janthinobacterium sp. (strain Marseille) (Minibacterium massiliensis)).